The following is a 393-amino-acid chain: Argininosuccinate synthase (393 aa).

ATP-binding positions include 10–18 and A37; that span reads AYSGGLDTS. Y88 is a binding site for L-citrulline. G118 is an ATP binding site. L-aspartate contacts are provided by T120, N124, and D125. N124 is an L-citrulline binding site. Positions 128, 176, 185, 261, and 273 each coordinate L-citrulline.

This sequence belongs to the argininosuccinate synthase family. Type 1 subfamily. Homotetramer.

The protein localises to the cytoplasm. It catalyses the reaction L-citrulline + L-aspartate + ATP = 2-(N(omega)-L-arginino)succinate + AMP + diphosphate + H(+). It participates in amino-acid biosynthesis; L-arginine biosynthesis; L-arginine from L-ornithine and carbamoyl phosphate: step 2/3. The protein is Argininosuccinate synthase of Carsonella ruddii (strain PV).